We begin with the raw amino-acid sequence, 171 residues long: Probable chorismate pyruvate-lyase (171 aa).

Positions 36, 78, 116, and 157 each coordinate substrate.

The protein belongs to the UbiC family.

Its subcellular location is the cytoplasm. The catalysed reaction is chorismate = 4-hydroxybenzoate + pyruvate. Its pathway is cofactor biosynthesis; ubiquinone biosynthesis. In terms of biological role, removes the pyruvyl group from chorismate, with concomitant aromatization of the ring, to provide 4-hydroxybenzoate (4HB) for the ubiquinone pathway. This is Probable chorismate pyruvate-lyase from Bartonella henselae (strain ATCC 49882 / DSM 28221 / CCUG 30454 / Houston 1) (Rochalimaea henselae).